The primary structure comprises 196 residues: MVTIGVDEAGRGPLAGPVVAAAVVLCKPRPSGLDDSKKLSAARRAELEEKIKRRCRWAVGVVEPDEIDRLNIFGATMLAMTLAVGALCEQLAHDEDVGEVLVDGNLTPHGRRPEWCWPARPIVGGDALEPCISAASIIAKEHRDRLMREAALAHPHYGWERNAGYGTPEHLAALREHGPTPLHRRSFAPVAQLQLL.

The region spanning 1-196 (MVTIGVDEAG…FAPVAQLQLL (196 aa)) is the RNase H type-2 domain. A divalent metal cation-binding residues include Asp-7, Glu-8, and Asp-103.

The protein belongs to the RNase HII family. Requires Mn(2+) as cofactor. Mg(2+) serves as cofactor.

It is found in the cytoplasm. The catalysed reaction is Endonucleolytic cleavage to 5'-phosphomonoester.. In terms of biological role, endonuclease that specifically degrades the RNA of RNA-DNA hybrids. This chain is Ribonuclease HII, found in Novosphingobium aromaticivorans (strain ATCC 700278 / DSM 12444 / CCUG 56034 / CIP 105152 / NBRC 16084 / F199).